We begin with the raw amino-acid sequence, 967 residues long: Zinc finger protein with KRAB and SCAN domains 2 (967 aa).

Lys-22 is covalently cross-linked (Glycyl lysine isopeptide (Lys-Gly) (interchain with G-Cter in SUMO2)). In terms of domain architecture, SCAN box spans 45-127 (RKCFRQFCYE…ALVVHLEKET (83 aa)). The disordered stretch occupies residues 150–205 (WEVADFQPEQVETQPRAVSREEPGSLHSGHQEQLNRKRERRPLPKNARPSPWVPAL). Positions 167-185 (VSREEPGSLHSGHQEQLNR) are enriched in basic and acidic residues. One can recognise a KRAB domain in the interval 229–300 (VKDVHVARGF…GLHSSNKRSI (72 aa)). Residues Lys-242, Lys-259, Lys-277, Lys-337, Lys-482, and Lys-529 each participate in a glycyl lysine isopeptide (Lys-Gly) (interchain with G-Cter in SUMO2) cross-link. Over residues 586–602 (RASAPSPSTPEEVPSPS) the composition is skewed to low complexity. A disordered region spans residues 586–626 (RASAPSPSTPEEVPSPSRQERGGIEVEPQEPTGWEPEETSQ). Phosphoserine occurs at positions 591 and 600. Residues Lys-734, Lys-745, and Lys-752 each participate in a glycyl lysine isopeptide (Lys-Gly) (interchain with G-Cter in SUMO2) cross-link. C2H2-type zinc fingers lie at residues 775–797 (YKCGVCGKCFGRSRSLIRHQRIH), 803–825 (FKCLDCGKSFNDSSNFGAHQRIH), 831–853 (YRCGECGKCFSQSSSLIIHQRTH), 859–881 (YQCGECGKSFTNSSHFSAHRRVH), 887–909 (YKCVDCEKSFNNCTRFREHRRIH), and 915–937 (YGCAQCGKRFSKSSVLTKHREVH). Residues 941-967 (KPLPHPPSLYCPENPHKGKTDEFRKTF) are disordered. Over residues 954–967 (NPHKGKTDEFRKTF) the composition is skewed to basic and acidic residues.

The protein belongs to the krueppel C2H2-type zinc-finger protein family.

The protein localises to the nucleus. Functionally, may be involved in transcriptional regulation. The chain is Zinc finger protein with KRAB and SCAN domains 2 (ZKSCAN2) from Homo sapiens (Human).